Consider the following 1256-residue polypeptide: Pullulanase A (1256 aa).

The signal sequence occupies residues 1–44 (MRKTPSHTEKKMVYSIRSLKNGTGSVLIGASLVLLAMATPTISS). The segment at 42–117 (ISSDESTPTT…VTTETKAEEP (76 aa)) is disordered. Residues 48 to 61 (TPTTNEPNNRNTTT) are compositionally biased toward low complexity. Positions 79–90 (DISSPRNANASL) are enriched in polar residues. Residues 99–111 (TEPTTSTSPVTTE) are compositionally biased toward low complexity. Substrate is bound by residues 141-143 (WTW), Trp153, Asp199, 248-250 (WYW), Trp261, Lys303, and Asn308. Ca(2+) contacts are provided by Ser646 and Tyr648. Substrate-binding positions include 652–653 (YD) and Phe728. Catalysis depends on Asp763, which acts as the Nucleophile. The Proton donor role is filled by Glu792. Position 794 (Trp794) interacts with substrate. Ca(2+) is bound by residues Met813, Thr816, and Asp817. Positions 824, 827, and 834 each coordinate substrate. Residues Asp867 and Asp871 each contribute to the Ca(2+) site. Residues Asn881, Lys954, and 974–976 (DSY) contribute to the substrate site. Asp977 serves as a coordination point for Ca(2+). Residues 1126 to 1224 (SQNGTSHEST…TPDRQAELPN (99 aa)) are disordered. The segment covering 1134-1172 (STAEEKPDSTPSKPEHQDPAPEARPDSTKPDAKVADAEN) has biased composition (basic and acidic residues). Residues 1181-1194 (SQAEQPAQEAQASS) show a composition bias toward low complexity. Polar residues predominate over residues 1200-1210 (QNESVENSSKK). The short motif at 1222–1226 (LPNTG) is the LPXTG sorting signal element. At Thr1225 the chain carries Pentaglycyl murein peptidoglycan amidated threonine. Residues 1226 to 1256 (GIKNENKLLFAGISLLALLGLGFLLKNKKEN) constitute a propeptide, removed by sortase.

It belongs to the glycosyl hydrolase 13 family.

It is found in the secreted. The protein resides in the cell wall. Its subcellular location is the cell surface. The catalysed reaction is Hydrolysis of (1-&gt;6)-alpha-D-glucosidic linkages in pullulan, amylopectin and glycogen, and in the alpha- and beta-limit dextrins of amylopectin and glycogen.. Inhibited by 4-O-alpha-D-glucopyranosylmoranoline (G1M). Virulence factor. Involved in the degradation of glycogen of the mammalian host cells. Hydrolyzes the alpha-1,6-branchpoints of glycogen. Hydrolyzes pullulan. Does not hydrolyze dextran. Binds to mouse lung alveolar type II cells that are rich in glycogen stores. Is an alpha-glucan-specific carbohydrate-binding protein, which binds to amylose (pure alpha-(1,4)-linked glucose), amylopectin (alpha-(1,4)-linked glucose with alpha-(1,6) branch points), pullulan (linear polymer of mixed alpha-(1,4)- and alpha-(1,6)-linked glucose) and glycogen (similar to amylopectin with more frequent alpha-(1,6) branch points) in vitro. Does not bind to dextran (a linear polymer of alpha-(1,6)-linked glucose). This is Pullulanase A from Streptococcus pneumoniae serotype 2 (strain D39 / NCTC 7466).